Consider the following 409-residue polypeptide: Sulfide-quinone reductase (409 aa).

FAD is bound by residues 8–12, 34–35, and cysteine 129; these read GGRFG and NK. The active-site Cysteine persulfide intermediate is cysteine 178. Residues asparagine 271, aspartate 307, and glycine 317 each coordinate FAD. The active-site Cysteine persulfide intermediate is cysteine 350.

Belongs to the SQRD family. In terms of assembly, monomer. Requires FAD as cofactor.

The protein resides in the membrane. It carries out the reaction n a quinone + n hydrogen sulfide + n H(+) = polysulfur(n-2) + n a quinol. Its activity is regulated as follows. Inhibited by the quinone analog 2-heptyl-4-hydroxyquinolone N-oxide (HQNO). Inactivated by iodoacetamide treatment. Inhibited by KCN. Functionally, catalyzes the oxidation of sulfides, such as hydrogen sulfide, with the help of a quinone. Has the highest activity with caldariella quinone and decylubiquinone, and lower activity with naphtoquinones. Consecutive reaction cycles lead to the accumulation of a polysulfide product on the active site Cys residues; these products are released when they exceed a critical length, typically as cyclooctasulfur. The protein is Sulfide-quinone reductase of Acidianus ambivalens (Desulfurolobus ambivalens).